The chain runs to 253 residues: MAKAAVTKRHHFMIQKLLILLSYGYTNGLDDAHSLRCNLTIKDPTPADPLWYEAKCFVGEILILHLSNINKTMTSGDPGETANATEVKKCLTQPLKNLCQKLRNKVSNTKVDTHKTNGYPHLQVTMIYPQSQGRTPSATWEFNISDSYFFTFYTENMSWRSANDESGVIMNKWKDDGEFVKQLKFLIHECSQKMDEFLKQSKEKPRSTSRSPSITQLTSTSPLPPPSHSTSKKGFISVGLIFISLLFAFAFAM.

The N-terminal stretch at 1–28 is a signal peptide; that stretch reads MAKAAVTKRHHFMIQKLLILLSYGYTNG. An intrachain disulfide couples cysteine 37 to cysteine 56. 5 N-linked (GlcNAc...) asparagine glycosylation sites follow: asparagine 38, asparagine 70, asparagine 83, asparagine 143, and asparagine 156. A disulfide bridge links cysteine 90 with cysteine 190. Residues 198-230 are disordered; sequence LKQSKEKPRSTSRSPSITQLTSTSPLPPPSHST. Residues 211–221 show a composition bias toward low complexity; sequence SPSITQLTSTS. Serine 229 carries GPI-anchor amidated serine lipidation. A propeptide spans 230-253 (removed in mature form); it reads TSKKGFISVGLIFISLLFAFAFAM.

It belongs to the NKG2D ligand family. In terms of processing, glycosylated. Expressed predominantly in embryonic brain.

The protein localises to the cell membrane. Its function is as follows. Acts as a ligand for KLRK1. The chain is Retinoic acid early-inducible protein 1-beta (Raet1b) from Mus musculus (Mouse).